A 337-amino-acid polypeptide reads, in one-letter code: Eukaryotic translation initiation factor 3 subunit H (337 aa).

Positions 21 to 153 constitute an MPN domain; sequence VQCDGLAVMK…LKAYRLTPQA (133 aa).

The protein belongs to the eIF-3 subunit H family. As to quaternary structure, component of the eukaryotic translation initiation factor 3 (eIF-3) complex. The eIF-3 complex interacts with pix. Interacts with mxt.

The protein resides in the cytoplasm. Component of the eukaryotic translation initiation factor 3 (eIF-3) complex, which is involved in protein synthesis of a specialized repertoire of mRNAs and, together with other initiation factors, stimulates binding of mRNA and methionyl-tRNAi to the 40S ribosome. The eIF-3 complex specifically targets and initiates translation of a subset of mRNAs involved in cell proliferation. The chain is Eukaryotic translation initiation factor 3 subunit H from Drosophila pseudoobscura pseudoobscura (Fruit fly).